A 113-amino-acid chain; its full sequence is Large ribosomal subunit protein P2B (113 aa).

Positions 66-113 are disordered; sequence PSGGGAIDMGAPAAVAGGGAAPAEEAKKEEKVEEKEESDEDMGFSLFD. Over residues 89–99 the composition is skewed to basic and acidic residues; that stretch reads EEAKKEEKVEE.

It belongs to the eukaryotic ribosomal protein P1/P2 family. P1 and P2 exist as dimers at the large ribosomal subunit. Post-translationally, phosphorylated.

In terms of biological role, plays an important role in the elongation step of protein synthesis. The chain is Large ribosomal subunit protein P2B (RPP2B) from Zea mays (Maize).